A 314-amino-acid polypeptide reads, in one-letter code: uncharacterized protein (314 aa).

The signal sequence occupies residues 1–18 (MKVSLLIFLIILVGVIKS). Residues N43, N96, N109, N116, N117, and N161 are each glycosylated (N-linked (GlcNAc...) asparagine). Residues 252 to 314 (SMRITKNNPH…PKSIDFHHLF (63 aa)) are disordered. 2 stretches are compositionally biased toward low complexity: residues 257–268 (KNNPHLNNNNNN) and 285–296 (KTTTKTSTKTTS).

The protein localises to the secreted. This is an uncharacterized protein from Dictyostelium discoideum (Social amoeba).